The following is a 369-amino-acid chain: Biglycan (369 aa).

Residues 1–16 (MWPLWLVASLLALSQA) form the signal peptide. A propeptide spanning residues 17–37 (LPFEQKGFWDFTLDDGLPMLN) is cleaved from the precursor. Residues Ser-42 and Ser-48 are each glycosylated (O-linked (Xyl...) (glycosaminoglycan) serine). 2 cysteine pairs are disulfide-bonded: Cys-64–Cys-70 and Cys-68–Cys-77. LRR repeat units follow at residues 83–103 (KAVPKEISPDTMLLDLQNNDI), 104–127 (SELRADDFKGLHHLYALVLVNNKI), 128–151 (SKIHEKAFSPLRKLQKLYISKNHL), 152–172 (VEIPPNLPSSLVELRIHDNRI), 173–196 (RKVPKGVFSGLRNMNCIEMGGNPL), 197–221 (ENSGFEPGAFDGLKLNYLRISEAKL), 222–242 (TGIPKDLPETLNELHLDHNKI), 243–266 (QAIELEDLLRYSKLYRLGLGHNQI), 267–290 (RMIENGSLSFLPTLRELHLDNNKL), 291–313 (SRVPSGLPDLKLLQVVYLHTNNI), 314–343 (TKVGVNDFCPVGFGVKRAYYNGISLFNNPV), and 344–369 (PYWEVQPATFRCVTDRLAIQFGNYKK). Residues Asn-271 and Asn-312 are each glycosylated (N-linked (GlcNAc...) asparagine). Cys-322 and Cys-355 are oxidised to a cystine.

This sequence belongs to the small leucine-rich proteoglycan (SLRP) family. SLRP class I subfamily. In terms of assembly, homodimer. Forms a ternary complex with MFAP2 and ELN. The two attached glycosaminoglycan chains can be either chondroitin sulfate or dermatan sulfate.

The protein localises to the secreted. It is found in the extracellular space. It localises to the extracellular matrix. In terms of biological role, may be involved in collagen fiber assembly. The protein is Biglycan (BGN) of Canis lupus familiaris (Dog).